Here is a 301-residue protein sequence, read N- to C-terminus: UDP-3-O-acyl-N-acetylglucosamine deacetylase (301 aa).

Residues His81, His237, and Asp241 each coordinate Zn(2+). The active-site Proton donor is His264.

The protein belongs to the LpxC family. Zn(2+) serves as cofactor.

It catalyses the reaction a UDP-3-O-[(3R)-3-hydroxyacyl]-N-acetyl-alpha-D-glucosamine + H2O = a UDP-3-O-[(3R)-3-hydroxyacyl]-alpha-D-glucosamine + acetate. The protein operates within glycolipid biosynthesis; lipid IV(A) biosynthesis; lipid IV(A) from (3R)-3-hydroxytetradecanoyl-[acyl-carrier-protein] and UDP-N-acetyl-alpha-D-glucosamine: step 2/6. Its function is as follows. Catalyzes the hydrolysis of UDP-3-O-myristoyl-N-acetylglucosamine to form UDP-3-O-myristoylglucosamine and acetate, the committed step in lipid A biosynthesis. This Leptospira interrogans serogroup Icterohaemorrhagiae serovar copenhageni (strain Fiocruz L1-130) protein is UDP-3-O-acyl-N-acetylglucosamine deacetylase.